The following is a 775-amino-acid chain: Kojibiose phosphorylase (775 aa).

361-362 provides a ligand contact to substrate; it reads WD. E501 functions as the Proton donor in the catalytic mechanism. 614-615 serves as a coordination point for substrate; that stretch reads KQ.

The protein belongs to the glycosyl hydrolase 65 family. Homohexamer.

The catalysed reaction is kojibiose + phosphate = beta-D-glucose 1-phosphate + D-glucose. Its activity is regulated as follows. Inhibited by Hg(2+) and Pb(2+). Its function is as follows. Catalyzes the reversible phosphorolysis of kojibiose into beta-D-glucose 1-phosphate (Glc1P) and D-glucose. Can act with alpha-1,2-oligoglucans, such as selaginose, but more slowly. Inactive when disaccharides with linkages other than alpha-1,2 linkages, such as sophorose, trehalose, neotrehalose, nigerose, laminaribiose, maltose, cellobiose, isomaltose, gentiobiose, sucrose and lactose, are used as substrates. In contrast, shows broad specificity for the reverse reaction. Various monosaccharides and disaccharides having a glucosyl residue at the non-reducing end are effective acceptors. In Thermoanaerobacter brockii (Thermoanaerobium brockii), this protein is Kojibiose phosphorylase.